The sequence spans 519 residues: Ribonuclease Y (519 aa).

Residues 3–23 traverse the membrane as a helical segment; the sequence is PLAILISILLSLFCLVVGYYV. The 64-residue stretch at 209 to 272 folds into the KH domain; the sequence is TVSVVNLPND…ETARIALDKL (64 aa). Residues 335–428 form the HD domain; that stretch reads VLKHSMEVAF…VAAADALSAA (94 aa).

The protein belongs to the RNase Y family.

The protein resides in the cell membrane. Its function is as follows. Endoribonuclease that initiates mRNA decay. The protein is Ribonuclease Y of Bacillus licheniformis (strain ATCC 14580 / DSM 13 / JCM 2505 / CCUG 7422 / NBRC 12200 / NCIMB 9375 / NCTC 10341 / NRRL NRS-1264 / Gibson 46).